A 583-amino-acid polypeptide reads, in one-letter code: AP-1-like transcription factor YAP1 (583 aa).

The interval 1–86 is disordered; sequence MSTSTAKRPF…KELEDKVSQL (86 aa). Over residues 8 to 17 the composition is skewed to basic and acidic residues; it reads RPFDNKRAGS. Residues 24–36 show a composition bias toward low complexity; it reads SDSGGNNSGSSPA. The span at 37 to 46 shows a compositional bias: basic residues; it reads SKRRERKPGR. The short motif at 41–48 is the Bipartite nuclear localization signal element; it reads ERKPGRKP. Composition is skewed to basic and acidic residues over residues 47-58 and 67-84; these read KPLETEAKDKRT and AFRERRERKMKELEDKVS. Residues 51-114 enclose the bZIP domain; it reads TEAKDKRTAQ…TNLLSELKRY (64 aa). Positions 54-77 are basic motif; that stretch reads KDKRTAQNRAAQRAFRERRERKMK. A leucine-zipper region spans residues 79 to 86; it reads LEDKVSQL. A Bipartite nuclear localization signal motif is present at residues 120–127; sequence KKRDSILL. Low complexity predominate over residues 177-195; it reads SKIPSPSSDSTSPSASTSI. The disordered stretch occupies residues 177–233; that stretch reads SKIPSPSSDSTSPSASTSILDNANNKSVSSTNLNHSRSSISNSSSSPSNVNGLSSRK. Positions 196–207 are enriched in polar residues; the sequence is LDNANNKSVSST. Residues 208-230 are compositionally biased toward low complexity; that stretch reads NLNHSRSSISNSSSSPSNVNGLS. A n-CRD region spans residues 265–272; it reads CSKLSMAC. Cystine bridges form between cysteine 265–cysteine 531 and cysteine 272–cysteine 562. Disordered regions lie at residues 275–329 and 350–373; these read KSNP…SASA and QYNDSSHSQATPNGLDNDSSVSAW. Positions 297–312 are enriched in low complexity; sequence KSNSNVNITNHNNNKI. Positions 316-329 are enriched in polar residues; it reads DLSSSAPLHDSASA. The segment at 531–562 is c-CRD; sequence CSEVWDRITAHPRYSDLDIDGLCLELRTKAKC. A Nuclear export signal motif is present at residues 547-554; it reads LDIDGLCL.

This sequence belongs to the bZIP family. YAP subfamily. In terms of processing, oxidative stress induces conformational changes through oxidation of cysteine residues, masking the nuclear export signal, thus abolishing nuclear export by CRM1/exportin 1.

It is found in the nucleus. Its subcellular location is the cytoplasm. Functionally, transcription activator involved in oxidative stress response and cadmium resistance. Regulates the transcription of genes encoding antioxidant enzymes and components of the cellular thiol-reducing pathways. Activity of the transcription factor is controlled through oxidation of specific cysteine residues resulting in the alteration of its subcellular location. Activation by alkyl hydroperoxides or cadmium induces nuclear accumulation and as a result YAP1 transcriptional activity. The sequence is that of AP-1-like transcription factor YAP1 (YAP1) from Kluyveromyces lactis (strain ATCC 8585 / CBS 2359 / DSM 70799 / NBRC 1267 / NRRL Y-1140 / WM37) (Yeast).